A 320-amino-acid chain; its full sequence is Methionyl-tRNA formyltransferase (320 aa).

A (6S)-5,6,7,8-tetrahydrofolate-binding site is contributed by 114–117 (SLLP).

Belongs to the Fmt family.

The catalysed reaction is L-methionyl-tRNA(fMet) + (6R)-10-formyltetrahydrofolate = N-formyl-L-methionyl-tRNA(fMet) + (6S)-5,6,7,8-tetrahydrofolate + H(+). Functionally, attaches a formyl group to the free amino group of methionyl-tRNA(fMet). The formyl group appears to play a dual role in the initiator identity of N-formylmethionyl-tRNA by promoting its recognition by IF2 and preventing the misappropriation of this tRNA by the elongation apparatus. The protein is Methionyl-tRNA formyltransferase of Acinetobacter baumannii (strain SDF).